A 577-amino-acid chain; its full sequence is Arginine--tRNA ligase (577 aa).

Positions 122 to 132 match the 'HIGH' region motif; the sequence is PNVAKEMHVGH.

It belongs to the class-I aminoacyl-tRNA synthetase family. Monomer.

It localises to the cytoplasm. The enzyme catalyses tRNA(Arg) + L-arginine + ATP = L-arginyl-tRNA(Arg) + AMP + diphosphate. This is Arginine--tRNA ligase from Escherichia fergusonii (strain ATCC 35469 / DSM 13698 / CCUG 18766 / IAM 14443 / JCM 21226 / LMG 7866 / NBRC 102419 / NCTC 12128 / CDC 0568-73).